The following is an 824-amino-acid chain: Lysine-specific histone demethylase 1B homolog (824 aa).

The tract at residues 1–31 (MTTELEIDDRKEEEAQIPGETSESEEGDEPV) is disordered. Positions 245 to 346 (PFTDVIANIV…YGAFDFRIDP (102 aa)) constitute an SWIRM domain. FAD is bound by residues 352-407 (PKIA…AQII), Val-579, Glu-788, and 796-798 (QTM).

This sequence belongs to the flavin monoamine oxidase family. Requires FAD as cofactor. In hermaphrodites, expressed in gut cells, embryonic cells and sheath cells. Not expressed in sperm or pharyngeal neurons.

Its subcellular location is the nucleus. It carries out the reaction N(6),N(6)-dimethyl-L-lysyl(4)-[histone H3] + 2 A + 2 H2O = L-lysyl(4)-[histone H3] + 2 formaldehyde + 2 AH2. Histone demethylase that demethylates di-methylated 'Lys-4' of histone H3, a specific tag for epigenetic transcriptional activation, thereby acting as a corepressor. Acts by oxidizing the substrate by FAD to generate the corresponding imine that is subsequently hydrolyzed. Plays a role in the mitotic development of the germline. May be involved in H3 demethylation in mitotic cells including gut and embryonic cells. Plays a role in sensitivity upon interstrand cross-link DNA damage, probably by positively regulating the expression of mlh-1. Plays a role in developmental growth and lifespan regulation in response to ultraviolet-induced damage. No obvious role in larval development, sex chromosome segregation or for regulating meiotic crossover frequency. The sequence is that of Lysine-specific histone demethylase 1B homolog from Caenorhabditis elegans.